A 480-amino-acid chain; its full sequence is Pyruvate kinase II (480 aa).

Arg36 lines the substrate pocket. K(+)-binding residues include Asn38, Ser40, and Asp70. 38–41 (NFSH) lines the ATP pocket. Positions 77 and 160 each coordinate ATP. Residue Lys223 participates in substrate binding. Glu225 provides a ligand contact to Mg(2+). Positions 251, 252, and 284 each coordinate substrate. Asp252 provides a ligand contact to Mg(2+).

Belongs to the pyruvate kinase family. As to quaternary structure, homotetramer. It depends on Mg(2+) as a cofactor. Requires K(+) as cofactor.

It carries out the reaction pyruvate + ATP = phosphoenolpyruvate + ADP + H(+). It participates in carbohydrate degradation; glycolysis; pyruvate from D-glyceraldehyde 3-phosphate: step 5/5. With respect to regulation, allosterically activated by AMP and by several sugar phosphates. Belongs to type II PK. Its function is as follows. Catalyzes the formation of pyruvate in the last step of glycolysis, it is irreversible under physiological conditions. The reaction is critical for the control of metabolic flux in the second part of glycolysis. This is Pyruvate kinase II (pykA) from Salmonella typhimurium (strain LT2 / SGSC1412 / ATCC 700720).